Reading from the N-terminus, the 154-residue chain is Low molecular weight protein-tyrosine-phosphatase PtpA (154 aa).

The active-site Nucleophile is Cys8. Residue Arg14 is part of the active site. Asp120 functions as the Proton donor in the catalytic mechanism.

Belongs to the low molecular weight phosphotyrosine protein phosphatase family. Interacts with host CORO1A. Post-translationally, phosphorylations at Tyr-122 and Tyr-123 are essential for phosphatase activity.

It localises to the secreted. The catalysed reaction is O-phospho-L-tyrosyl-[protein] + H2O = L-tyrosyl-[protein] + phosphate. In terms of biological role, secreted tyrosine phosphatase that plays a critical role during infection as a bacterial effector protein that counteracts host defenses. Required for intramacrophage survival. The sequence is that of Low molecular weight protein-tyrosine-phosphatase PtpA (ptpA) from Staphylococcus aureus (strain bovine RF122 / ET3-1).